The chain runs to 721 residues: Polyribonucleotide nucleotidyltransferase (721 aa).

D495 and D501 together coordinate Mg(2+). The 60-residue stretch at 562–621 folds into the KH domain; it reads PRLLSFRIDPELIGTVIGPGGRTIKGITERTNTKIDIEDGGIVTIASHDGAAAEEAQKII. The S1 motif domain occupies 631–699; the sequence is GEIFTGVVTR…SRGRINLTLR (69 aa). A disordered region spans residues 702-721; the sequence is SQNSGMSYPEPTPTPVAPLN. Positions 711–721 are enriched in pro residues; sequence EPTPTPVAPLN.

Belongs to the polyribonucleotide nucleotidyltransferase family. Mg(2+) serves as cofactor.

Its subcellular location is the cytoplasm. The enzyme catalyses RNA(n+1) + phosphate = RNA(n) + a ribonucleoside 5'-diphosphate. In terms of biological role, involved in mRNA degradation. Catalyzes the phosphorolysis of single-stranded polyribonucleotides processively in the 3'- to 5'-direction. The chain is Polyribonucleotide nucleotidyltransferase from Prochlorococcus marinus (strain MIT 9312).